Here is a 410-residue protein sequence, read N- to C-terminus: Acetate kinase (410 aa).

A Mg(2+)-binding site is contributed by asparagine 7. Residue lysine 14 coordinates ATP. Residue arginine 88 participates in substrate binding. The active-site Proton donor/acceptor is aspartate 145. Residues 203 to 207, 278 to 280, and 326 to 330 each bind ATP; these read HAGNG, DTR, and GIGEN. A Mg(2+)-binding site is contributed by glutamate 379.

The protein belongs to the acetokinase family. Homodimer. Mg(2+) is required as a cofactor. It depends on Mn(2+) as a cofactor.

Its subcellular location is the cytoplasm. It carries out the reaction acetate + ATP = acetyl phosphate + ADP. Its pathway is metabolic intermediate biosynthesis; acetyl-CoA biosynthesis; acetyl-CoA from acetate: step 1/2. In terms of biological role, catalyzes the formation of acetyl phosphate from acetate and ATP. Can also catalyze the reverse reaction. The sequence is that of Acetate kinase from Aster yellows witches'-broom phytoplasma (strain AYWB).